We begin with the raw amino-acid sequence, 277 residues long: 4-hydroxy-3-methylbut-2-enyl diphosphate reductase (277 aa).

Position 12 (Cys-12) interacts with [4Fe-4S] cluster. (2E)-4-hydroxy-3-methylbut-2-enyl diphosphate is bound by residues His-36 and His-70. The dimethylallyl diphosphate site is built by His-36 and His-70. Positions 36 and 70 each coordinate isopentenyl diphosphate. Position 92 (Cys-92) interacts with [4Fe-4S] cluster. Position 120 (His-120) interacts with (2E)-4-hydroxy-3-methylbut-2-enyl diphosphate. His-120 provides a ligand contact to dimethylallyl diphosphate. His-120 serves as a coordination point for isopentenyl diphosphate. Residue Glu-122 is the Proton donor of the active site. Thr-158 contributes to the (2E)-4-hydroxy-3-methylbut-2-enyl diphosphate binding site. A [4Fe-4S] cluster-binding site is contributed by Cys-186. (2E)-4-hydroxy-3-methylbut-2-enyl diphosphate-binding residues include Ser-214, Asn-216, and Ser-258. Dimethylallyl diphosphate contacts are provided by Ser-214, Asn-216, and Ser-258. The isopentenyl diphosphate site is built by Ser-214, Asn-216, and Ser-258.

The protein belongs to the IspH family. [4Fe-4S] cluster serves as cofactor.

It catalyses the reaction isopentenyl diphosphate + 2 oxidized [2Fe-2S]-[ferredoxin] + H2O = (2E)-4-hydroxy-3-methylbut-2-enyl diphosphate + 2 reduced [2Fe-2S]-[ferredoxin] + 2 H(+). It carries out the reaction dimethylallyl diphosphate + 2 oxidized [2Fe-2S]-[ferredoxin] + H2O = (2E)-4-hydroxy-3-methylbut-2-enyl diphosphate + 2 reduced [2Fe-2S]-[ferredoxin] + 2 H(+). Its pathway is isoprenoid biosynthesis; dimethylallyl diphosphate biosynthesis; dimethylallyl diphosphate from (2E)-4-hydroxy-3-methylbutenyl diphosphate: step 1/1. The protein operates within isoprenoid biosynthesis; isopentenyl diphosphate biosynthesis via DXP pathway; isopentenyl diphosphate from 1-deoxy-D-xylulose 5-phosphate: step 6/6. Its function is as follows. Catalyzes the conversion of 1-hydroxy-2-methyl-2-(E)-butenyl 4-diphosphate (HMBPP) into a mixture of isopentenyl diphosphate (IPP) and dimethylallyl diphosphate (DMAPP). Acts in the terminal step of the DOXP/MEP pathway for isoprenoid precursor biosynthesis. In Campylobacter jejuni subsp. jejuni serotype O:6 (strain 81116 / NCTC 11828), this protein is 4-hydroxy-3-methylbut-2-enyl diphosphate reductase.